We begin with the raw amino-acid sequence, 1138 residues long: Pesticidal crystal protein Cry7Aa (1138 aa).

This sequence belongs to the delta endotoxin family.

Promotes colloidosmotic lysis by binding to the midgut epithelial cells of Coleoptera. This protein is not toxic in its natural form. It is highly toxic to Colorado potato beetle larvae after an in vitro solubilization and trypsin activation step. The chain is Pesticidal crystal protein Cry7Aa (cry7Aa) from Bacillus thuringiensis.